A 393-amino-acid polypeptide reads, in one-letter code: Arginine biosynthesis bifunctional protein ArgJ (393 aa).

6 residues coordinate substrate: Thr-145, Lys-171, Thr-182, Glu-265, Asn-388, and Ser-393. Catalysis depends on Thr-182, which acts as the Nucleophile.

The protein belongs to the ArgJ family. Heterotetramer of two alpha and two beta chains.

It localises to the cytoplasm. It carries out the reaction N(2)-acetyl-L-ornithine + L-glutamate = N-acetyl-L-glutamate + L-ornithine. The catalysed reaction is L-glutamate + acetyl-CoA = N-acetyl-L-glutamate + CoA + H(+). The protein operates within amino-acid biosynthesis; L-arginine biosynthesis; L-ornithine and N-acetyl-L-glutamate from L-glutamate and N(2)-acetyl-L-ornithine (cyclic): step 1/1. Its pathway is amino-acid biosynthesis; L-arginine biosynthesis; N(2)-acetyl-L-ornithine from L-glutamate: step 1/4. Its function is as follows. Catalyzes two activities which are involved in the cyclic version of arginine biosynthesis: the synthesis of N-acetylglutamate from glutamate and acetyl-CoA as the acetyl donor, and of ornithine by transacetylation between N(2)-acetylornithine and glutamate. This chain is Arginine biosynthesis bifunctional protein ArgJ, found in Nitratidesulfovibrio vulgaris (strain ATCC 29579 / DSM 644 / CCUG 34227 / NCIMB 8303 / VKM B-1760 / Hildenborough) (Desulfovibrio vulgaris).